We begin with the raw amino-acid sequence, 506 residues long: Nostrin (506 aa).

The 260-residue stretch at 1-260 (MRDPLTDCSY…AISKVDVEKD (260 aa)) folds into the F-BAR domain. Ser-114 bears the Phosphoserine mark. Coiled-coil stretches lie at residues 160-230 (SLTQ…LNQY) and 305-334 (KLGR…ASSS). The REM-1 domain maps to 292-372 (PMDKERRKSL…SYKLSSVLAD (81 aa)). Positions 413–435 (KAESKAPAGGQNNPSSSPSGSTV) are disordered. A compositionally biased stretch (low complexity) spans 419–435 (PAGGQNNPSSSPSGSTV). The region spanning 438 to 497 (ASKHLCKALYTFQARQDDELNLEKGDIVTVHEKKEEGWWFGSLKGKRGHFPAAYVEELPP) is the SH3 domain. Position 479 is a phosphoserine (Ser-479).

Homotrimer. Interacts with NOS3, DNM2, WASL and CAV1. Interacts with DAB2. Interacts (via SH3 domain) with DNM2; this interaction allows the recruitment of NOS3 to dynamin-positive structures.

It localises to the cell membrane. The protein localises to the cytoplasmic vesicle. It is found in the cytoplasm. Its subcellular location is the cytoskeleton. The protein resides in the nucleus. In terms of biological role, multivalent adapter protein which may decrease NOS3 activity by inducing its translocation away from the plasma membrane. The chain is Nostrin from Mus musculus (Mouse).